We begin with the raw amino-acid sequence, 119 residues long: uncharacterized protein (119 aa).

A helical membrane pass occupies residues 80–104; that stretch reads VFPLVYLFCVVFQFLSLGCYLSIFF.

It is found in the membrane. This is an uncharacterized protein from Saccharomyces cerevisiae (strain ATCC 204508 / S288c) (Baker's yeast).